A 169-amino-acid chain; its full sequence is Aspartic protease inhibitor 6 (169 aa).

N-linked (GlcNAc...) asparagine glycosylation is present at Asn1. 2 cysteine pairs are disulfide-bonded: Cys30-Cys75 and Cys124-Cys134.

This sequence belongs to the protease inhibitor I3 (leguminous Kunitz-type inhibitor) family.

It localises to the vacuole. Functionally, inhibitor of cathepsin D (aspartic protease). May also inhibit trypsin and chymotrypsin (serine proteases). Protects the plant by inhibiting proteases of invading organisms. This is Aspartic protease inhibitor 6 from Solanum tuberosum (Potato).